The chain runs to 119 residues: Holo-[acyl-carrier-protein] synthase (119 aa).

Residues D7 and E56 each contribute to the Mg(2+) site.

Belongs to the P-Pant transferase superfamily. AcpS family. Mg(2+) serves as cofactor.

The protein localises to the cytoplasm. It carries out the reaction apo-[ACP] + CoA = holo-[ACP] + adenosine 3',5'-bisphosphate + H(+). Its function is as follows. Transfers the 4'-phosphopantetheine moiety from coenzyme A to a Ser of acyl-carrier-protein. In Chlamydia trachomatis serovar D (strain ATCC VR-885 / DSM 19411 / UW-3/Cx), this protein is Holo-[acyl-carrier-protein] synthase.